The chain runs to 150 residues: Ribosome maturation factor RimP (150 aa).

It belongs to the RimP family.

It localises to the cytoplasm. Functionally, required for maturation of 30S ribosomal subunits. This chain is Ribosome maturation factor RimP, found in Acaryochloris marina (strain MBIC 11017).